Reading from the N-terminus, the 213-residue chain is Uridine kinase (213 aa).

13–20 is an ATP binding site; sequence GASASGKS.

It belongs to the uridine kinase family.

Its subcellular location is the cytoplasm. The enzyme catalyses uridine + ATP = UMP + ADP + H(+). It carries out the reaction cytidine + ATP = CMP + ADP + H(+). It functions in the pathway pyrimidine metabolism; CTP biosynthesis via salvage pathway; CTP from cytidine: step 1/3. It participates in pyrimidine metabolism; UMP biosynthesis via salvage pathway; UMP from uridine: step 1/1. This Haemophilus influenzae (strain PittGG) protein is Uridine kinase.